A 296-amino-acid chain; its full sequence is MMFKQYLQVTKPGIIFGNLISVIGGFLLASKGSIDYPLFIYTLVGVSLVVASGCVFNNYIDRDIDRKMERTKNRVLVKGLISPGVSLVYATLLGIAGFMLLWFGANPLACWLGVMGFVVYVGVYSLYMKRHSVYGTLIGSLSGAAPPVIGYCAVTGDFDSGAAILLAIFSLWQMPHSYAIAIFRFKDYQAANIPVLPVVKGISVAKNHITLYIIAFAVATLMLTLGGYAGYKYLVVAAAVSVWWLGMALRGYKVEDDKVWARKLFGFSIIAITALSIMMSVDFMVPNSQNLLTYVW.

Topologically, residues 1–9 (MMFKQYLQV) are cytoplasmic. Residues 10–28 (TKPGIIFGNLISVIGGFLL) traverse the membrane as a helical segment. The Periplasmic portion of the chain corresponds to 29–37 (ASKGSIDYP). The helical transmembrane segment at 38–56 (LFIYTLVGVSLVVASGCVF) threads the bilayer. Over 57 to 78 (NNYIDRDIDRKMERTKNRVLVK) the chain is Cytoplasmic. A helical membrane pass occupies residues 79–97 (GLISPGVSLVYATLLGIAG). Topologically, residues 98-107 (FMLLWFGANP) are periplasmic. Residues 108-126 (LACWLGVMGFVVYVGVYSL) form a helical membrane-spanning segment. Over 127 to 197 (YMKRHSVYGT…YQAANIPVLP (71 aa)) the chain is Cytoplasmic. The helical transmembrane segment at 198–216 (VVKGISVAKNHITLYIIAF) threads the bilayer. Residues 217-228 (AVATLMLTLGGY) lie on the Periplasmic side of the membrane. Residues 229-247 (AGYKYLVVAAAVSVWWLGM) traverse the membrane as a helical segment. At 248 to 268 (ALRGYKVEDDKVWARKLFGFS) the chain is on the cytoplasmic side. Residues 269-287 (IIAITALSIMMSVDFMVPN) form a helical membrane-spanning segment. Over 288-296 (SQNLLTYVW) the chain is Periplasmic.

The protein belongs to the UbiA prenyltransferase family. Protoheme IX farnesyltransferase subfamily.

It localises to the cell inner membrane. It catalyses the reaction heme b + (2E,6E)-farnesyl diphosphate + H2O = Fe(II)-heme o + diphosphate. It participates in porphyrin-containing compound metabolism; heme O biosynthesis; heme O from protoheme: step 1/1. Converts heme B (protoheme IX) to heme O by substitution of the vinyl group on carbon 2 of heme B porphyrin ring with a hydroxyethyl farnesyl side group. This is Protoheme IX farnesyltransferase from Salmonella typhimurium (strain LT2 / SGSC1412 / ATCC 700720).